The following is a 291-amino-acid chain: tRNA U34 carboxymethyltransferase (291 aa).

Residues K61, W75, K80, G100, 122–124 (DPS), 149–150 (VE), Y169, and R284 each bind carboxy-S-adenosyl-L-methionine.

The protein belongs to the class I-like SAM-binding methyltransferase superfamily. CmoB family. Homotetramer.

The catalysed reaction is carboxy-S-adenosyl-L-methionine + 5-hydroxyuridine(34) in tRNA = 5-carboxymethoxyuridine(34) in tRNA + S-adenosyl-L-homocysteine + H(+). Its function is as follows. Catalyzes carboxymethyl transfer from carboxy-S-adenosyl-L-methionine (Cx-SAM) to 5-hydroxyuridine (ho5U) to form 5-carboxymethoxyuridine (cmo5U) at position 34 in tRNAs. The sequence is that of tRNA U34 carboxymethyltransferase from Campylobacter jejuni subsp. doylei (strain ATCC BAA-1458 / RM4099 / 269.97).